A 103-amino-acid chain; its full sequence is MANLAKATGKLKSVDYEVFGRVQGVCFRMYTEDEARKLGVVGWVKNTRQGTVTGQVQGPEDKVNSMKAWLSRVGSPSSRIDRIDFNDEKEITKLQYNGFSTRY.

The Acylphosphatase-like domain occupies 13-103 (SVDYEVFGRV…LQYNGFSTRY (91 aa)). Catalysis depends on residues Arg28 and Asn46.

It belongs to the acylphosphatase family.

The enzyme catalyses an acyl phosphate + H2O = a carboxylate + phosphate + H(+). This chain is Acylphosphatase-2 (acyp2), found in Xenopus tropicalis (Western clawed frog).